The sequence spans 337 residues: WAT1-related protein At1g11460 (337 aa).

The next 10 helical transmembrane spans lie at 14–34, 46–66, 83–103, 107–127, 139–159, 188–208, 220–240, 254–274, 284–304, and 309–329; these read WPPI…NALV, IIGA…AYIL, FISG…GLSY, TVAC…ALIL, AGMI…FLTF, WLLG…WILF, FSST…LSLY, FVIG…TVSV, VFVS…DFII, and LYLG…VFLW. Residues 27-157 enclose the EamA 1 domain; the sequence is MGSVNALVKK…IICISGALFL (131 aa). The region spanning 220-328 is the EamA 2 domain; it reads FSSTCLMSIF…GTITGLYVFL (109 aa).

This sequence belongs to the drug/metabolite transporter (DMT) superfamily. Plant drug/metabolite exporter (P-DME) (TC 2.A.7.4) family.

Its subcellular location is the membrane. This chain is WAT1-related protein At1g11460, found in Arabidopsis thaliana (Mouse-ear cress).